Consider the following 133-residue polypeptide: Small ribosomal subunit protein uS11 (133 aa).

The protein belongs to the universal ribosomal protein uS11 family. Part of the 30S ribosomal subunit. Interacts with proteins S7 and S18. Binds to IF-3.

Located on the platform of the 30S subunit, it bridges several disparate RNA helices of the 16S rRNA. Forms part of the Shine-Dalgarno cleft in the 70S ribosome. This Cupriavidus metallidurans (strain ATCC 43123 / DSM 2839 / NBRC 102507 / CH34) (Ralstonia metallidurans) protein is Small ribosomal subunit protein uS11.